The following is a 347-amino-acid chain: GMP reductase (347 aa).

108 to 131 (ADFEKTQQILSQNPQLNFVCIDVA) serves as a coordination point for NADP(+). K(+) contacts are provided by glycine 181 and glycine 183. The active-site Thioimidate intermediate is the cysteine 186. Position 216–239 (216–239 (IISDGGCTMPGDVAKAFGGGADFV)) interacts with NADP(+).

This sequence belongs to the IMPDH/GMPR family. GuaC type 1 subfamily. As to quaternary structure, homotetramer.

The enzyme catalyses IMP + NH4(+) + NADP(+) = GMP + NADPH + 2 H(+). In terms of biological role, catalyzes the irreversible NADPH-dependent deamination of GMP to IMP. It functions in the conversion of nucleobase, nucleoside and nucleotide derivatives of G to A nucleotides, and in maintaining the intracellular balance of A and G nucleotides. The chain is GMP reductase from Klebsiella pneumoniae subsp. pneumoniae (strain ATCC 700721 / MGH 78578).